Consider the following 365-residue polypeptide: Cobalt-precorrin-5B C(1)-methyltransferase (365 aa).

Belongs to the CbiD family.

It catalyses the reaction Co-precorrin-5B + S-adenosyl-L-methionine = Co-precorrin-6A + S-adenosyl-L-homocysteine. It functions in the pathway cofactor biosynthesis; adenosylcobalamin biosynthesis; cob(II)yrinate a,c-diamide from sirohydrochlorin (anaerobic route): step 6/10. Functionally, catalyzes the methylation of C-1 in cobalt-precorrin-5B to form cobalt-precorrin-6A. The sequence is that of Cobalt-precorrin-5B C(1)-methyltransferase from Pseudomonas fluorescens (strain Pf0-1).